The primary structure comprises 145 residues: 3-dehydroquinate dehydratase (145 aa).

Catalysis depends on Tyr22, which acts as the Proton acceptor. The substrate site is built by Asn73, His79, and Asp86. His99 functions as the Proton donor in the catalytic mechanism. Residues 100–101 (LS) and Arg110 each bind substrate.

The protein belongs to the type-II 3-dehydroquinase family. Homododecamer.

The catalysed reaction is 3-dehydroquinate = 3-dehydroshikimate + H2O. It functions in the pathway metabolic intermediate biosynthesis; chorismate biosynthesis; chorismate from D-erythrose 4-phosphate and phosphoenolpyruvate: step 3/7. Its function is as follows. Catalyzes a trans-dehydration via an enolate intermediate. This is 3-dehydroquinate dehydratase from Prochlorococcus marinus (strain NATL1A).